The sequence spans 712 residues: Elongation factor G (712 aa).

A tr-type G domain is found at 8–290; the sequence is TRYRNIGISA…AVIEFLPSPT (283 aa). GTP is bound by residues 17-24, 88-92, and 142-145; these read AHIDAGKT, DTPGH, and NKMD.

The protein belongs to the TRAFAC class translation factor GTPase superfamily. Classic translation factor GTPase family. EF-G/EF-2 subfamily.

It localises to the cytoplasm. Catalyzes the GTP-dependent ribosomal translocation step during translation elongation. During this step, the ribosome changes from the pre-translocational (PRE) to the post-translocational (POST) state as the newly formed A-site-bound peptidyl-tRNA and P-site-bound deacylated tRNA move to the P and E sites, respectively. Catalyzes the coordinated movement of the two tRNA molecules, the mRNA and conformational changes in the ribosome. This chain is Elongation factor G, found in Acinetobacter baumannii (strain AB307-0294).